Consider the following 423-residue polypeptide: Glutamate-1-semialdehyde 2,1-aminomutase (423 aa).

At lysine 262 the chain carries N6-(pyridoxal phosphate)lysine.

This sequence belongs to the class-III pyridoxal-phosphate-dependent aminotransferase family. HemL subfamily. Requires pyridoxal 5'-phosphate as cofactor.

The protein localises to the cytoplasm. It carries out the reaction (S)-4-amino-5-oxopentanoate = 5-aminolevulinate. It functions in the pathway porphyrin-containing compound metabolism; protoporphyrin-IX biosynthesis; 5-aminolevulinate from L-glutamyl-tRNA(Glu): step 2/2. This Methanosphaera stadtmanae (strain ATCC 43021 / DSM 3091 / JCM 11832 / MCB-3) protein is Glutamate-1-semialdehyde 2,1-aminomutase.